The sequence spans 140 residues: Nucleoside triphosphatase NudI (140 aa).

The Nudix hydrolase domain maps to 1–140; that stretch reads MRHRTIVCPL…RVTLSLKGLL (140 aa). Positions 38–58 match the Nudix box motif; the sequence is GVEPGERIEEALRREIREELG.

This sequence belongs to the Nudix hydrolase family. NudI subfamily. As to quaternary structure, monomer. It depends on Mg(2+) as a cofactor.

The catalysed reaction is a ribonucleoside 5'-triphosphate + H2O = a ribonucleoside 5'-phosphate + diphosphate + H(+). It carries out the reaction a 2'-deoxyribonucleoside 5'-triphosphate + H2O = a 2'-deoxyribonucleoside 5'-phosphate + diphosphate + H(+). The enzyme catalyses dUTP + H2O = dUMP + diphosphate + H(+). It catalyses the reaction dTTP + H2O = dTMP + diphosphate + H(+). The catalysed reaction is dCTP + H2O = dCMP + diphosphate + H(+). Functionally, catalyzes the hydrolysis of nucleoside triphosphates, with a preference for pyrimidine deoxynucleoside triphosphates (dUTP, dTTP and dCTP). This is Nucleoside triphosphatase NudI from Klebsiella pneumoniae subsp. pneumoniae (strain ATCC 700721 / MGH 78578).